The following is a 343-amino-acid chain: Dihydroorotate dehydrogenase (quinone) (343 aa).

FMN contacts are provided by residues 61-65 (AGLDK) and T85. K65 serves as a coordination point for substrate. 110 to 114 (NRMGF) is a binding site for substrate. The FMN site is built by N138 and N171. Residue N171 participates in substrate binding. The active-site Nucleophile is S174. Residue N176 coordinates substrate. Positions 216 and 244 each coordinate FMN. 245–246 (NT) lines the substrate pocket. FMN contacts are provided by residues G267, G296, and 317-318 (YS).

It belongs to the dihydroorotate dehydrogenase family. Type 2 subfamily. As to quaternary structure, monomer. FMN serves as cofactor.

Its subcellular location is the cell membrane. It carries out the reaction (S)-dihydroorotate + a quinone = orotate + a quinol. Its pathway is pyrimidine metabolism; UMP biosynthesis via de novo pathway; orotate from (S)-dihydroorotate (quinone route): step 1/1. Catalyzes the conversion of dihydroorotate to orotate with quinone as electron acceptor. In Pseudomonas syringae pv. syringae (strain B728a), this protein is Dihydroorotate dehydrogenase (quinone).